The chain runs to 176 residues: Corrinoid adenosyltransferase (176 aa).

ATP-binding positions include 6-14, lysine 24, 131-136, and asparagine 155; these read TRTGDNGTT and RRLERI.

This sequence belongs to the Cob(I)alamin adenosyltransferase family.

It localises to the cytoplasm. The catalysed reaction is 2 cob(II)yrinate a,c diamide + reduced [electron-transfer flavoprotein] + 2 ATP = 2 adenosylcob(III)yrinate a,c-diamide + 2 triphosphate + oxidized [electron-transfer flavoprotein] + 3 H(+). The enzyme catalyses 2 cob(II)alamin + reduced [electron-transfer flavoprotein] + 2 ATP = 2 adenosylcob(III)alamin + 2 triphosphate + oxidized [electron-transfer flavoprotein] + 3 H(+). It participates in cofactor biosynthesis; adenosylcobalamin biosynthesis; adenosylcobalamin from cob(II)yrinate a,c-diamide: step 2/7. This Citrobacter freundii protein is Corrinoid adenosyltransferase.